The primary structure comprises 261 residues: Cytochrome c oxidase subunit 3 (261 aa).

At Met-1 to Pro-15 the chain is on the mitochondrial matrix side. Residues Trp-16 to Trp-34 form a helical membrane-spanning segment. The Mitochondrial intermembrane portion of the chain corresponds to Phe-35–Ile-40. Residues Ala-41–Thr-66 form a helical membrane-spanning segment. At Phe-67 to Thr-72 the chain is on the mitochondrial matrix side. A helical transmembrane segment spans residues Pro-73–Ser-105. Over Leu-106–Glu-128 the chain is Mitochondrial intermembrane. The helical transmembrane segment at Val-129–Thr-152 threads the bilayer. The Mitochondrial matrix portion of the chain corresponds to Glu-153–Asn-155. The chain crosses the membrane as a helical span at residues Arg-156–Glu-183. The Mitochondrial intermembrane portion of the chain corresponds to Ala-184–Asp-190. Residues Ser-191–Ile-223 traverse the membrane as a helical segment. Residues Lys-224 to His-232 are Mitochondrial matrix-facing. A helical membrane pass occupies residues Phe-233 to Met-256. Residues Tyr-257 to Ser-261 lie on the Mitochondrial intermembrane side of the membrane.

The protein belongs to the cytochrome c oxidase subunit 3 family. As to quaternary structure, component of the cytochrome c oxidase (complex IV, CIV), a multisubunit enzyme composed of 14 subunits. The complex is composed of a catalytic core of 3 subunits MT-CO1, MT-CO2 and MT-CO3, encoded in the mitochondrial DNA, and 11 supernumerary subunits COX4I, COX5A, COX5B, COX6A, COX6B, COX6C, COX7A, COX7B, COX7C, COX8 and NDUFA4, which are encoded in the nuclear genome. The complex exists as a monomer or a dimer and forms supercomplexes (SCs) in the inner mitochondrial membrane with NADH-ubiquinone oxidoreductase (complex I, CI) and ubiquinol-cytochrome c oxidoreductase (cytochrome b-c1 complex, complex III, CIII), resulting in different assemblies (supercomplex SCI(1)III(2)IV(1) and megacomplex MCI(2)III(2)IV(2)).

The protein localises to the mitochondrion inner membrane. The catalysed reaction is 4 Fe(II)-[cytochrome c] + O2 + 8 H(+)(in) = 4 Fe(III)-[cytochrome c] + 2 H2O + 4 H(+)(out). Functionally, component of the cytochrome c oxidase, the last enzyme in the mitochondrial electron transport chain which drives oxidative phosphorylation. The respiratory chain contains 3 multisubunit complexes succinate dehydrogenase (complex II, CII), ubiquinol-cytochrome c oxidoreductase (cytochrome b-c1 complex, complex III, CIII) and cytochrome c oxidase (complex IV, CIV), that cooperate to transfer electrons derived from NADH and succinate to molecular oxygen, creating an electrochemical gradient over the inner membrane that drives transmembrane transport and the ATP synthase. Cytochrome c oxidase is the component of the respiratory chain that catalyzes the reduction of oxygen to water. Electrons originating from reduced cytochrome c in the intermembrane space (IMS) are transferred via the dinuclear copper A center (CU(A)) of subunit 2 and heme A of subunit 1 to the active site in subunit 1, a binuclear center (BNC) formed by heme A3 and copper B (CU(B)). The BNC reduces molecular oxygen to 2 water molecules using 4 electrons from cytochrome c in the IMS and 4 protons from the mitochondrial matrix. The polypeptide is Cytochrome c oxidase subunit 3 (MT-CO3) (Coturnix japonica (Japanese quail)).